The following is a 327-amino-acid chain: Methionyl-tRNA formyltransferase (327 aa).

A (6S)-5,6,7,8-tetrahydrofolate-binding site is contributed by 121–124; the sequence is SLLP.

It belongs to the Fmt family.

The catalysed reaction is L-methionyl-tRNA(fMet) + (6R)-10-formyltetrahydrofolate = N-formyl-L-methionyl-tRNA(fMet) + (6S)-5,6,7,8-tetrahydrofolate + H(+). Functionally, attaches a formyl group to the free amino group of methionyl-tRNA(fMet). The formyl group appears to play a dual role in the initiator identity of N-formylmethionyl-tRNA by promoting its recognition by IF2 and preventing the misappropriation of this tRNA by the elongation apparatus. The chain is Methionyl-tRNA formyltransferase from Burkholderia pseudomallei (strain 668).